Reading from the N-terminus, the 435-residue chain is Enolase (435 aa).

Glutamine 167 provides a ligand contact to (2R)-2-phosphoglycerate. Catalysis depends on glutamate 209, which acts as the Proton donor. Mg(2+)-binding residues include aspartate 246, glutamate 292, and aspartate 319. Lysine 344, arginine 373, serine 374, and lysine 395 together coordinate (2R)-2-phosphoglycerate. Lysine 344 (proton acceptor) is an active-site residue.

It belongs to the enolase family. Mg(2+) serves as cofactor.

It localises to the cytoplasm. The protein localises to the secreted. The protein resides in the cell surface. It catalyses the reaction (2R)-2-phosphoglycerate = phosphoenolpyruvate + H2O. It participates in carbohydrate degradation; glycolysis; pyruvate from D-glyceraldehyde 3-phosphate: step 4/5. Functionally, catalyzes the reversible conversion of 2-phosphoglycerate (2-PG) into phosphoenolpyruvate (PEP). It is essential for the degradation of carbohydrates via glycolysis. This Lachnospira eligens (strain ATCC 27750 / DSM 3376 / VPI C15-48 / C15-B4) (Eubacterium eligens) protein is Enolase.